Here is a 974-residue protein sequence, read N- to C-terminus: Mediator of RNA polymerase II transcription subunit 16 (974 aa).

The interval 62–92 (ESSSTLSTHSTTTSVNGSTTAGVGSTPNFGG) is disordered. Over residues 63–75 (SSSTLSTHSTTTS) the composition is skewed to low complexity. Residues 76 to 92 (VNGSTTAGVGSTPNFGG) show a composition bias toward polar residues. The short motif at 889-893 (KLPIK) is the Nuclear localization signal element.

This sequence belongs to the Mediator complex subunit 16 family. In terms of assembly, component of the Mediator complex, which is composed of at least 21 subunits that form three structurally distinct submodules. The Mediator head module contains MED6, MED8, MED11, SRB4/MED17, SRB5/MED18, ROX3/MED19, SRB2/MED20 and SRB6/MED22, the middle module contains MED1, MED4, NUT1/MED5, MED7, CSE2/MED9, NUT2/MED10, SRB7/MED21 and SOH1/MED31, and the tail module contains MED2, PGD1/MED3, RGR1/MED14, GAL11/MED15 and SIN4/MED16. The head and the middle modules interact directly with RNA polymerase II, whereas the elongated tail module interacts with gene-specific regulatory proteins. Interacts with HOG1. Post-translationally, phosphorylated by KIN28.

It localises to the nucleus. Its function is as follows. Component of the Mediator complex, a coactivator involved in the regulated transcription of nearly all RNA polymerase II-dependent genes. Mediator functions as a bridge to convey information from gene-specific regulatory proteins to the basal RNA polymerase II transcription machinery. The Mediator complex, having a compact conformation in its free form, is recruited to promoters by direct interactions with regulatory proteins and serves for the assembly of a functional preinitiation complex with RNA polymerase II and the general transcription factors. The Mediator complex unfolds to an extended conformation and partially surrounds RNA polymerase II, specifically interacting with the unphosphorylated form of the C-terminal domain (CTD) of RNA polymerase II. The Mediator complex dissociates from the RNA polymerase II holoenzyme and stays at the promoter when transcriptional elongation begins. In Saccharomyces cerevisiae (strain ATCC 204508 / S288c) (Baker's yeast), this protein is Mediator of RNA polymerase II transcription subunit 16 (SIN4).